A 542-amino-acid polypeptide reads, in one-letter code: Phosphoacetylglucosamine mutase (542 aa).

Position 1 is an N-acetylmethionine (methionine 1). Threonine 62 is subject to Phosphothreonine. Residue serine 64 is the Phosphoserine intermediate of the active site. Residues serine 64, aspartate 276, aspartate 278, and aspartate 280 each coordinate Mg(2+). Phosphoserine is present on serine 64. Residues 370–372, 496–500, and arginine 505 contribute to the substrate site; these read EAN and RPSGT.

It belongs to the phosphohexose mutase family. It depends on Mg(2+) as a cofactor.

It carries out the reaction N-acetyl-alpha-D-glucosamine 1-phosphate = N-acetyl-D-glucosamine 6-phosphate. It participates in nucleotide-sugar biosynthesis; UDP-N-acetyl-alpha-D-glucosamine biosynthesis; N-acetyl-alpha-D-glucosamine 1-phosphate from alpha-D-glucosamine 6-phosphate (route I): step 2/2. In terms of biological role, catalyzes the conversion of GlcNAc-6-P into GlcNAc-1-P during the synthesis of uridine diphosphate/UDP-GlcNAc, a sugar nucleotide critical to multiple glycosylation pathways including protein N- and O-glycosylation. The protein is Phosphoacetylglucosamine mutase of Mus musculus (Mouse).